A 370-amino-acid chain; its full sequence is Putative phosphoserine aminotransferase (370 aa).

Residues 1–22 (MAELTIPADLKPRDGRFGSGPS) are disordered. Arg44 provides a ligand contact to L-glutamate. Positions 102, 148, 170, and 193 each coordinate pyridoxal 5'-phosphate. The residue at position 194 (Lys194) is an N6-(pyridoxal phosphate)lysine. 245-246 (NT) is a binding site for pyridoxal 5'-phosphate.

This sequence belongs to the class-V pyridoxal-phosphate-dependent aminotransferase family. SerC subfamily. In terms of assembly, homodimer. The cofactor is pyridoxal 5'-phosphate.

It is found in the cytoplasm. It carries out the reaction O-phospho-L-serine + 2-oxoglutarate = 3-phosphooxypyruvate + L-glutamate. The catalysed reaction is 4-(phosphooxy)-L-threonine + 2-oxoglutarate = (R)-3-hydroxy-2-oxo-4-phosphooxybutanoate + L-glutamate. The protein operates within amino-acid biosynthesis; L-serine biosynthesis; L-serine from 3-phospho-D-glycerate: step 2/3. It participates in cofactor biosynthesis; pyridoxine 5'-phosphate biosynthesis; pyridoxine 5'-phosphate from D-erythrose 4-phosphate: step 3/5. Functionally, catalyzes the reversible conversion of 3-phosphohydroxypyruvate to phosphoserine and of 3-hydroxy-2-oxo-4-phosphonooxybutanoate to phosphohydroxythreonine. The sequence is that of Putative phosphoserine aminotransferase from Mycobacterium sp. (strain JLS).